A 180-amino-acid chain; its full sequence is Der GTPase-activating protein YihI (180 aa).

Disordered stretches follow at residues 1 to 88 (MTRK…KERR) and 147 to 180 (PEVTEEAPVRKGAKTDEDLLDQFENMDLDSFGKE). 4 stretches are compositionally biased toward basic and acidic residues: residues 18 to 33 (FREKSTTQVDVEARKS), 50 to 67 (EALDPKHYANGQKKDPRL), 77 to 88 (VEKKPTTKKERR), and 153 to 163 (APVRKGAKTDE). Over residues 164-173 (DLLDQFENMD) the composition is skewed to acidic residues.

The protein belongs to the YihI family. In terms of assembly, interacts with Der.

Functionally, a GTPase-activating protein (GAP) that modifies Der/EngA GTPase function. May play a role in ribosome biogenesis. The sequence is that of Der GTPase-activating protein YihI from Photobacterium profundum (strain SS9).